The chain runs to 273 residues: Pantothenate synthetase (273 aa).

Residue 27–34 coordinates ATP; the sequence is MGALHNGH. His34 acts as the Proton donor in catalysis. A (R)-pantoate-binding site is contributed by Gln58. Gln58 contacts beta-alanine. An ATP-binding site is contributed by 144 to 147; that stretch reads GKKD. Residue Gln150 coordinates (R)-pantoate. ATP-binding positions include Val173 and 181 to 184; that span reads LSSR.

The protein belongs to the pantothenate synthetase family. As to quaternary structure, homodimer.

The protein localises to the cytoplasm. It catalyses the reaction (R)-pantoate + beta-alanine + ATP = (R)-pantothenate + AMP + diphosphate + H(+). It participates in cofactor biosynthesis; (R)-pantothenate biosynthesis; (R)-pantothenate from (R)-pantoate and beta-alanine: step 1/1. Its function is as follows. Catalyzes the condensation of pantoate with beta-alanine in an ATP-dependent reaction via a pantoyl-adenylate intermediate. The sequence is that of Pantothenate synthetase from Campylobacter fetus subsp. fetus (strain 82-40).